The following is an 822-amino-acid chain: Phenylalanine--tRNA ligase beta subunit (822 aa).

The tRNA-binding domain maps to 44–162; the sequence is LSKNTNLVVG…DQIALGSNAL (119 aa). The disordered stretch occupies residues 201–224; sequence QSSNNNQETKSTNYKTKNSEDQTN. Residues 430 to 513 enclose the B5 domain; that stretch reads RTNPTISLNL…RLYGCHKLPP (84 aa). Residues Asp491, Asp497, and Asp501 each contribute to the Mg(2+) site. The FDX-ACB domain maps to 730-822; the sequence is PKFPTVIRDL…LIKHFHIEIR (93 aa).

The protein belongs to the phenylalanyl-tRNA synthetase beta subunit family. Type 1 subfamily. As to quaternary structure, tetramer of two alpha and two beta subunits. It depends on Mg(2+) as a cofactor.

The protein localises to the cytoplasm. It catalyses the reaction tRNA(Phe) + L-phenylalanine + ATP = L-phenylalanyl-tRNA(Phe) + AMP + diphosphate + H(+). The sequence is that of Phenylalanine--tRNA ligase beta subunit from Onion yellows phytoplasma (strain OY-M).